Here is a 143-residue protein sequence, read N- to C-terminus: Peptide methionine sulfoxide reductase MsrB (143 aa).

The MsrB domain maps to 5–126; sequence KEEKIKSLNR…NSAALRFVPK (122 aa). Residue cysteine 115 is the Nucleophile of the active site.

Belongs to the MsrB Met sulfoxide reductase family.

It catalyses the reaction L-methionyl-[protein] + [thioredoxin]-disulfide + H2O = L-methionyl-(R)-S-oxide-[protein] + [thioredoxin]-dithiol. In Bacillus subtilis (strain 168), this protein is Peptide methionine sulfoxide reductase MsrB.